The chain runs to 62 residues: Alpha-conotoxin Vt1.27 (62 aa).

A signal peptide spans 1-21; the sequence is MGMRMMFTVFLLVVLATTVVS. Residues 22-40 constitute a propeptide that is removed on maturation; the sequence is FTLDRASDGASAAADLVAR. 2 disulfide bridges follow: C46/C52 and C47/C61.

Belongs to the conotoxin A superfamily. In terms of tissue distribution, expressed by the venom duct.

It localises to the secreted. Its function is as follows. The short (45-61) amidated synthetic peptide inhibits the rat neuronal alpha-3-beta-2/CHRNA3-CHRNB2 nicotinic acetylcholine receptor (nAChR) (IC(50)=1.16 uM). It also inhibits Cav2.2/CACNA1C voltage-gated calcium channel (IC(50)=398 nM). In vivo, when tested in rat pain models, this short amidated peptide increases the pain threshold. The protein is Alpha-conotoxin Vt1.27 of Conus planorbis (Planorbis cone).